Consider the following 321-residue polypeptide: Beta-ketoacyl-[acyl-carrier-protein] synthase III (321 aa).

Catalysis depends on residues cysteine 113 and histidine 248. The ACP-binding stretch occupies residues 249–253; that stretch reads QANAR. Asparagine 278 is a catalytic residue.

Belongs to the thiolase-like superfamily. FabH family. In terms of assembly, homodimer.

It is found in the cytoplasm. The enzyme catalyses malonyl-[ACP] + acetyl-CoA + H(+) = 3-oxobutanoyl-[ACP] + CO2 + CoA. It participates in lipid metabolism; fatty acid biosynthesis. Functionally, catalyzes the condensation reaction of fatty acid synthesis by the addition to an acyl acceptor of two carbons from malonyl-ACP. Catalyzes the first condensation reaction which initiates fatty acid synthesis and may therefore play a role in governing the total rate of fatty acid production. Possesses both acetoacetyl-ACP synthase and acetyl transacylase activities. Its substrate specificity determines the biosynthesis of branched-chain and/or straight-chain of fatty acids. The polypeptide is Beta-ketoacyl-[acyl-carrier-protein] synthase III (Erythrobacter litoralis (strain HTCC2594)).